The chain runs to 206 residues: Transcription elongation factor A protein-like 5 (206 aa).

Residues 1 to 26 (MEKLYKENEGKPENERNLESEGKPED) show a composition bias toward basic and acidic residues. Positions 1–206 (MEKLYKENEG…QKDLEDVPYV (206 aa)) are disordered. Residues 27–42 (EGSTEDEGKSDEEEKP) are compositionally biased toward acidic residues. The segment covering 43–56 (DMEGKTECEGKRED) has biased composition (basic and acidic residues). The span at 57–70 (EGEPGDEGQLEDEG) shows a compositional bias: acidic residues. 4 stretches are compositionally biased toward basic and acidic residues: residues 71-86 (NQEKQGKSEGEDKPQS), 102-113 (AAEKRPAEDYVP), 121-160 (DRGTDDSPKDSQEDLQERHLSSEEMMRECGDVSRAQEELR), and 196-206 (GQKDLEDVPYV).

Belongs to the TFS-II family. TFA subfamily.

It is found in the nucleus. In terms of biological role, may be involved in transcriptional regulation. The sequence is that of Transcription elongation factor A protein-like 5 (TCEAL5) from Homo sapiens (Human).